The following is a 425-amino-acid chain: Serine--tRNA ligase (425 aa).

L-serine is bound at residue 233–235; sequence TAE. 264-266 serves as a coordination point for ATP; that stretch reads RRE. Glutamate 287 provides a ligand contact to L-serine. Position 351-354 (351-354) interacts with ATP; the sequence is EISS. Serine 387 is a binding site for L-serine.

It belongs to the class-II aminoacyl-tRNA synthetase family. Type-1 seryl-tRNA synthetase subfamily. As to quaternary structure, homodimer. The tRNA molecule binds across the dimer.

It localises to the cytoplasm. It carries out the reaction tRNA(Ser) + L-serine + ATP = L-seryl-tRNA(Ser) + AMP + diphosphate + H(+). The enzyme catalyses tRNA(Sec) + L-serine + ATP = L-seryl-tRNA(Sec) + AMP + diphosphate + H(+). Its pathway is aminoacyl-tRNA biosynthesis; selenocysteinyl-tRNA(Sec) biosynthesis; L-seryl-tRNA(Sec) from L-serine and tRNA(Sec): step 1/1. Its function is as follows. Catalyzes the attachment of serine to tRNA(Ser). Is also able to aminoacylate tRNA(Sec) with serine, to form the misacylated tRNA L-seryl-tRNA(Sec), which will be further converted into selenocysteinyl-tRNA(Sec). The chain is Serine--tRNA ligase from Thermotoga petrophila (strain ATCC BAA-488 / DSM 13995 / JCM 10881 / RKU-1).